We begin with the raw amino-acid sequence, 239 residues long: Homeobox-leucine zipper protein HOX12 (239 aa).

A disordered region spans residues 22–65; sequence PEAATSGGEQKKARQRRRRKVKPEAAAALAGESGGDEQAKKRRL. Positions 58 to 117 form a DNA-binding region, homeobox; that stretch reads EQAKKRRLSDEQARFLEMSFKKERKLETPRKVQLAAELGLDAKQVAVWFQNRRARHKSKL. Residues 107–168 are a coiled coil; sequence QNRRARHKSK…KLAAVAAATT (62 aa).

This sequence belongs to the HD-ZIP homeobox family. Class I subfamily. Expressed in seedlings, roots, stems, leaf sheaths and panicles.

Its subcellular location is the nucleus. Functionally, probable transcription factor. This is Homeobox-leucine zipper protein HOX12 (HOX12) from Oryza sativa subsp. indica (Rice).